A 548-amino-acid polypeptide reads, in one-letter code: Tyrosine-protein phosphatase non-receptor type 61F (548 aa).

The Cytoplasmic segment spans residues Met-1–Ser-525. The Tyrosine-protein phosphatase domain occupies Phe-33 to Gly-296. The tract at residues Lys-46–Arg-65 is disordered. The residue at position 83 (Ser-83) is a Phosphoserine. Tyr-86 bears the Phosphotyrosine mark. Substrate contacts are provided by residues Asp-203, Cys-237–Arg-243, and Gln-281. The active-site Phosphocysteine intermediate is Cys-237. 3 consecutive short sequence motifs (PXXP motif (SH3-binding)) follow at residues Pro-327–Pro-330, Pro-339–Pro-342, and Pro-394–Pro-397. The interval Glu-386–Gln-517 is disordered. A compositionally biased stretch (acidic residues) spans Ser-404 to Thr-428. 2 consecutive short sequence motifs (PXXP motif (SH3-binding)) follow at residues Pro-459 to Pro-462 and Pro-480 to Pro-483. Over residues Lys-502–Gln-517 the composition is skewed to basic and acidic residues. Residues Leu-526–Thr-545 form a helical membrane-spanning segment. The Extracellular segment spans residues Lys-546 to Gly-548.

It belongs to the protein-tyrosine phosphatase family. Non-receptor class 1 subfamily. Interacts (via C-terminus) with dock/dreadlocks; this interaction is independent of insulin stimulation and is required for dephosphorylation of the insulin-like receptor InR.

Its subcellular location is the cytoplasm. It localises to the membrane. The protein localises to the endomembrane system. The protein resides in the nucleus. The enzyme catalyses O-phospho-L-tyrosyl-[protein] + H2O = L-tyrosyl-[protein] + phosphate. Non-receptor protein tyrosine phosphatase. Required for maintaining dock/dreadlocks in its non-phosphorylated state. Negative regulator of InR/insulin-like receptor signaling through dephosphorylation of tyrosines when recruited by dock/dreadlocks. The sequence is that of Tyrosine-protein phosphatase non-receptor type 61F from Drosophila melanogaster (Fruit fly).